A 123-amino-acid polypeptide reads, in one-letter code: Omega-oxotoxin-Ot1a (123 aa).

Positions 1–16 are cleaved as a signal peptide; the sequence is MKIVLVFVCTLYLAQA. The propeptide occupies 17 to 54; sequence TYLSEQDVNEVSEFLEALDQANEAASEMVEAAETEEAR. The Oxytoxin-type inhibitor cystine knot (ICK) domain occupies 55–122; that stretch reads DWECLPLHSS…GKINTCDKYK (68 aa). Disulfide bonds link cysteine 58–cysteine 72, cysteine 65–cysteine 77, cysteine 69–cysteine 118, cysteine 71–cysteine 106, and cysteine 79–cysteine 104.

It belongs to the spiderine family. Spiderine subfamily. Mass spectrometry data suggest a carboxylated free C-terminal residue. As to expression, expressed by the venom gland.

The protein localises to the secreted. Its function is as follows. Weak blocker of vertebrate P/Q-, N- and L-type voltage-gated calcium channels (Cav1 and Cav2). Is both paralytic and lethal when injected into lepidopteran larvae. Is not toxic to mice. The polypeptide is Omega-oxotoxin-Ot1a (Oxyopes takobius (Lynx spider)).